The chain runs to 506 residues: Galactose/methyl galactoside import ATP-binding protein MglA (506 aa).

ABC transporter domains are found at residues Leu-14–Glu-249 and Thr-260–Leu-506. ATP is bound at residue Gly-46–Ser-53.

The protein belongs to the ABC transporter superfamily. Galactose/methyl galactoside importer (TC 3.A.1.2.3) family. The complex is composed of one ATP-binding protein (MglA), two transmembrane proteins (MglC) and a solute-binding protein (MglB).

The protein resides in the cell inner membrane. The enzyme catalyses D-galactose(out) + ATP + H2O = D-galactose(in) + ADP + phosphate + H(+). The catalysed reaction is methyl beta-D-galactoside(out) + ATP + H2O = methyl beta-D-galactoside(in) + ADP + phosphate + H(+). Part of the ABC transporter complex MglABC involved in galactose/methyl galactoside import. Responsible for energy coupling to the transport system. This chain is Galactose/methyl galactoside import ATP-binding protein MglA, found in Pasteurella multocida (strain Pm70).